The sequence spans 932 residues: MIPARLHRDYKGLVLLGILLGTLWETGCTQIRYSVPEELEKGSRVGDISRDLGLEPRELAERGVRIIPRGRTQLFALNPRSGSLVTAGRIDREELCMGAIKCQLNLDILMEDKVKIYGVEVEVRDINDNAPYFRESELEIKISENAATEMRFPLPHAWDPDIGKNSLQSYELSPNTHFSLIVQNGADGSKYPELVLKRALDREEKAAHHLVLTASDGGDPVRTGTARIRVMVLDANDNAPAFAQPEYRASVPENLALGTQLLVVNATDPDEGVNAEVRYSFRSVDDKAAQVFKLDCNSGTISTIGELDHEESGFYQMEVQAMDNAGYSARAKVLITVLDVNDNAPEVVLTSLASSVPENSPRGTLIALLNVNDQDSEENGQVICFIQGNLPFKLEKSYGNYYSLVTDIVLDREQVPSYNITVTATDRGTPPLSTETHISLNVADTNDNPPVFPQASYSAYIPENNPRGVSLVSVTAHDPDCEENAQITYSLAENTIQGASLSSYVSINSDTGVLYALSSFDYEQFRDLQVKVMARDNGHPPLSSNVSLSLFVLDQNDNAPEILYPALPTDGSTSVELAPRSAEPGYLVTKVVAVDRDSGQNAWLSYRLLKASEPGLFSVGLHTGEVRTARALLDRDALKQSLVVAVQDHGQPPLSATVTLTVAVANSIPQVLADLGSLESPANSETSDLTLYLVVAVAAVSCVFLAFVILLLALRLRRWHKSRLLQASGGGLTGAPASHFVGVDGVQAFLQTYSHEVSLTTDSRRSHLIFPQPNYADMLVSQESFEKSEPLLLSGDSVFSKDGHGLIEQAPPNTDWRFSQAQRPGTSGSQNGDDTGTWPNNQFDTEMLQAMILASASEAADGSSTLGGGAGTMGLSARYGPQFTLQHVPDYRQNVYIPGSNATLTNAAGKRDGKAPAGGNGNKKKSGKKEKK.

Residues 1-29 (MIPARLHRDYKGLVLLGILLGTLWETGCT) form the signal peptide. 6 consecutive Cadherin domains span residues 30 to 133 (QIRY…APYF), 134 to 242 (RESE…APAF), 243 to 347 (AQPE…APEV), 348 to 452 (VLTS…PPVF), 453 to 562 (PQAS…APEI), and 570 to 683 (DGST…SPAN). The Extracellular segment spans residues 30-692 (QIRYSVPEEL…NSETSDLTLY (663 aa)). 3 N-linked (GlcNAc...) asparagine glycosylation sites follow: asparagine 265, asparagine 419, and asparagine 545. Residues 693–713 (LVVAVAAVSCVFLAFVILLLA) traverse the membrane as a helical segment. Topologically, residues 714–932 (LRLRRWHKSR…KKKSGKKEKK (219 aa)) are cytoplasmic. 2 disordered regions span residues 803–841 (GHGL…WPNN) and 902–932 (ATLT…KEKK). Residues 816-841 (WRFSQAQRPGTSGSQNGDDTGTWPNN) show a composition bias toward polar residues. Residues 922–932 (NKKKSGKKEKK) are compositionally biased toward basic residues.

The protein localises to the cell membrane. Potential calcium-dependent cell-adhesion protein. May be involved in the establishment and maintenance of specific neuronal connections in the brain. The chain is Protocadherin gamma-A12 (PCDHGA12) from Pan troglodytes (Chimpanzee).